The primary structure comprises 861 residues: Linoleate 9S-lipoxygenase 2 (861 aa).

One can recognise a PLAT domain in the interval 29–160 (NALDFTDLAG…RYKSDRIFFV (132 aa)). A Lipoxygenase domain is found at 163–861 (PYLPSKTPEL…GKGIPNSVSI (699 aa)). A disordered region spans residues 212–246 (EGKENVRTTLGGSAEYPYPRRGRTGRPPTRTDPKS). Fe cation-binding residues include histidine 522, histidine 527, histidine 713, asparagine 717, and isoleucine 861.

This sequence belongs to the lipoxygenase family. In terms of assembly, monomer. The cofactor is Fe cation. Highly expressed in tubers and roots. Detected in flower buds and leaves.

It localises to the cytoplasm. The catalysed reaction is (9Z,12Z)-octadecadienoate + O2 = (9S)-hydroperoxy-(10E,12Z)-octadecadienoate. The protein operates within lipid metabolism; oxylipin biosynthesis. Its function is as follows. Plant lipoxygenases may be involved in a number of diverse aspects of plant physiology including growth and development, pest resistance, and senescence or responses to wounding. Catalyzes the hydroperoxidation of lipids containing a cis,cis-1,4-pentadiene structure. Linoleic acid is the preferred substrate, but is also active with linolenic and arachidonic acids. This chain is Linoleate 9S-lipoxygenase 2 (LOX1.2), found in Solanum tuberosum (Potato).